The primary structure comprises 591 residues: Heterogeneous nuclear ribonucleoprotein L-like (591 aa).

Residues 1-120 form a disordered region; that stretch reads MSSSSSSSPK…STEGGGSHHK (120 aa). The span at 20–31 shows a compositional bias: basic and acidic residues; sequence FESQAKRLKTEE. A Glycyl lysine isopeptide (Lys-Gly) (interchain with G-Cter in SUMO2) cross-link involves residue K28. The residue at position 37 (S37) is a Phosphoserine. Residue T48 is modified to Phosphothreonine. Over residues 57–73 the composition is skewed to gly residues; sequence SGGGDGGDGDGGSGGGG. Residues 74–91 are compositionally biased toward acidic residues; sequence DGEEGEGGEEGDEGDGDE. Positions 92–105 are enriched in gly residues; sequence GGSGGDEGGSGGGP. Phosphoserine occurs at positions 107, 117, and 124. RRM domains are found at residues 125–199, 215–293, and 384–458; these read PVVH…YSTS, NKVL…YARP, and SVVM…VSKQ. Residue K540 forms a Glycyl lysine isopeptide (Lys-Gly) (interchain with G-Cter in SUMO2) linkage.

Interacts with HNRNPL.

In terms of biological role, RNA-binding protein that functions as a regulator of alternative splicing for multiple target mRNAs, including PTPRC/CD45 and STAT5A. Required for alternative splicing of PTPRC. This is Heterogeneous nuclear ribonucleoprotein L-like (Hnrnpll) from Mus musculus (Mouse).